The sequence spans 135 residues: T-cell receptor gamma chain V region 5/10-13 (135 aa).

A signal peptide spans Met-1–Gly-18. The tract at residues Gln-19 to Cys-114 is v segment. The segment at Arg-115–Pro-135 is j segment.

In Mus musculus (Mouse), this protein is T-cell receptor gamma chain V region 5/10-13 (Tcrg-V1).